We begin with the raw amino-acid sequence, 269 residues long: Tryptophan synthase alpha chain (269 aa).

Catalysis depends on proton acceptor residues Glu49 and Asp60.

Belongs to the TrpA family. In terms of assembly, tetramer of two alpha and two beta chains.

The enzyme catalyses (1S,2R)-1-C-(indol-3-yl)glycerol 3-phosphate + L-serine = D-glyceraldehyde 3-phosphate + L-tryptophan + H2O. It functions in the pathway amino-acid biosynthesis; L-tryptophan biosynthesis; L-tryptophan from chorismate: step 5/5. The alpha subunit is responsible for the aldol cleavage of indoleglycerol phosphate to indole and glyceraldehyde 3-phosphate. The sequence is that of Tryptophan synthase alpha chain from Actinobacillus succinogenes (strain ATCC 55618 / DSM 22257 / CCUG 43843 / 130Z).